The chain runs to 556 residues: Olefin beta-lactone synthetase (556 aa).

ATP is bound by residues 187–195 (TSGSTGVPK), 321–326 (TPYGAT), aspartate 430, and arginine 445.

It belongs to the ATP-dependent AMP-binding enzyme family. Monomer. Forms a complex with OleB and OleD.

It localises to the cytoplasm. It catalyses the reaction a (2R,3S)-2-alkyl-3-hydroxyalkanoate + ATP = a cis-3-alkyl-4-alkyloxetan-2-one + AMP + diphosphate. Its function is as follows. Involved in olefin biosynthesis. Catalyzes the conversion of 2-alkyl-3-hydroxyalkanoic acids to beta-lactones in the presence of ATP. In Xanthomonas campestris pv. campestris (strain ATCC 33913 / DSM 3586 / NCPPB 528 / LMG 568 / P 25), this protein is Olefin beta-lactone synthetase.